A 244-amino-acid polypeptide reads, in one-letter code: Small ribosomal subunit protein uS3 (244 aa).

Residues 39–107 form the KH type-2 domain; the sequence is VREMLRKKLA…PAHINVTEVR (69 aa). Residues 213-244 are disordered; it reads VGQEKQDDSPRNDRNDRGDRGDRPSRPAREAR. Positions 216-244 are enriched in basic and acidic residues; the sequence is EKQDDSPRNDRNDRGDRGDRPSRPAREAR.

The protein belongs to the universal ribosomal protein uS3 family. Part of the 30S ribosomal subunit. Forms a tight complex with proteins S10 and S14.

Functionally, binds the lower part of the 30S subunit head. Binds mRNA in the 70S ribosome, positioning it for translation. The polypeptide is Small ribosomal subunit protein uS3 (Xanthomonas euvesicatoria pv. vesicatoria (strain 85-10) (Xanthomonas campestris pv. vesicatoria)).